A 402-amino-acid chain; its full sequence is Phosphoglycerate kinase (402 aa).

Substrate-binding positions include 24–26 (DFN), Arg-41, 64–67 (HMGR), Arg-123, and Arg-156. ATP-binding positions include Lys-207, Gly-298, Glu-329, and 358–361 (GGDS).

Belongs to the phosphoglycerate kinase family. Monomer.

Its subcellular location is the cytoplasm. The catalysed reaction is (2R)-3-phosphoglycerate + ATP = (2R)-3-phospho-glyceroyl phosphate + ADP. Its pathway is carbohydrate degradation; glycolysis; pyruvate from D-glyceraldehyde 3-phosphate: step 2/5. This is Phosphoglycerate kinase from Microcystis aeruginosa (strain NIES-843 / IAM M-2473).